The primary structure comprises 368 residues: uncharacterized protein (368 aa).

A disordered region spans residues 237-287 (ESLSIPSRRRPSSIAPIGTRPSRKEIAFSNSSTPTDQTLRPPNPPAANGNA). Low complexity predominate over residues 238 to 253 (SLSIPSRRRPSSIAPI). Polar residues predominate over residues 264–276 (FSNSSTPTDQTLR).

This is an uncharacterized protein from Schizosaccharomyces pombe (strain 972 / ATCC 24843) (Fission yeast).